The chain runs to 398 residues: DNA-directed RNA polymerase III subunit RPC4 (398 aa).

The disordered stretch occupies residues 1–114; the sequence is MSEGNAAGEP…SHSIFEQGPA (114 aa). Ser-2 bears the N-acetylserine mark. Position 42 is a phosphoserine (Ser-42). Residues 66–100 are compositionally biased toward basic and acidic residues; sequence KIKEEPKEEVTVKKEKRERDRDRQREGHGRGRGRP. Residues Lys-68 and Lys-78 each participate in a glycyl lysine isopeptide (Lys-Gly) (interchain with G-Cter in SUMO2) cross-link. Omega-N-methylarginine occurs at positions 95, 97, and 99. Glycyl lysine isopeptide (Lys-Gly) (interchain with G-Cter in SUMO2) cross-links involve residues Lys-141, Lys-152, Lys-160, Lys-190, Lys-199, Lys-206, Lys-220, Lys-285, Lys-302, Lys-310, and Lys-396. Positions 220-244 are disordered; it reads KEEPRDEEEEAKMKAPPKAARKTPG.

This sequence belongs to the eukaryotic RPC4/POLR3D RNA polymerase subunit family. In terms of assembly, component of the RNA polymerase III complex consisting of 17 subunits: a ten-subunit horseshoe-shaped catalytic core composed of POLR3A/RPC1, POLR3B/RPC2, POLR1C/RPAC1, POLR1D/RPAC2, POLR3K/RPC10, POLR2E/RPABC1, POLR2F/RPABC2, POLR2H/RPABC3, POLR2K/RPABC4 and POLR2L/RPABC5; a mobile stalk composed of two subunits POLR3H/RPC8 and CRCP/RPC9, protruding from the core and functioning primarily in transcription initiation; and additional subunits homologous to general transcription factors of the RNA polymerase II machinery, POLR3C/RPC3-POLR3F/RPC6-POLR3G/RPC7 heterotrimer required for transcription initiation and POLR3D/RPC4-POLR3E/RPC5 heterodimer involved in both transcription initiation and termination. Post-translationally, sumoylation on Lys-141 can serve as a signal to mark misfolded Pol III for proteasomal degradation.

Its subcellular location is the nucleus. Functionally, DNA-dependent RNA polymerase catalyzes the transcription of DNA into RNA using the four ribonucleoside triphosphates as substrates. Specific peripheric component of RNA polymerase III (Pol III) which synthesizes small non-coding RNAs including 5S rRNA, snRNAs, tRNAs and miRNAs from at least 500 distinct genomic loci. Assembles with POLR3E/RPC5 forming a subcomplex that binds the Pol III core. Enables recruitment of Pol III at transcription initiation site and drives transcription initiation from both type 2 and type 3 DNA promoters. Required for efficient transcription termination and reinitiation. Pol III plays a key role in sensing and limiting infection by intracellular bacteria and DNA viruses. Acts as nuclear and cytosolic DNA sensor involved in innate immune response. Can sense non-self dsDNA that serves as template for transcription into dsRNA. The non-self RNA polymerase III transcripts, such as Epstein-Barr virus-encoded RNAs (EBERs) induce type I interferon and NF-kappa-B through the RIG-I pathway. The polypeptide is DNA-directed RNA polymerase III subunit RPC4 (Homo sapiens (Human)).